The sequence spans 212 residues: Ribosomal RNA small subunit methyltransferase G (212 aa).

S-adenosyl-L-methionine-binding positions include glycine 73, phenylalanine 78, 96–98 (ESS), 124–125 (VE), and arginine 141.

The protein belongs to the methyltransferase superfamily. RNA methyltransferase RsmG family.

It localises to the cytoplasm. Functionally, specifically methylates the N7 position of a guanine in 16S rRNA. The polypeptide is Ribosomal RNA small subunit methyltransferase G (Aster yellows witches'-broom phytoplasma (strain AYWB)).